The primary structure comprises 1342 residues: DNA-directed RNA polymerase subunit beta (1342 aa).

The protein belongs to the RNA polymerase beta chain family. In terms of assembly, the RNAP catalytic core consists of 2 alpha, 1 beta, 1 beta' and 1 omega subunit. When a sigma factor is associated with the core the holoenzyme is formed, which can initiate transcription.

The enzyme catalyses RNA(n) + a ribonucleoside 5'-triphosphate = RNA(n+1) + diphosphate. DNA-dependent RNA polymerase catalyzes the transcription of DNA into RNA using the four ribonucleoside triphosphates as substrates. This chain is DNA-directed RNA polymerase subunit beta, found in Salmonella typhi.